Reading from the N-terminus, the 261-residue chain is tRNA pseudouridine synthase A 2 (261 aa).

Aspartate 59 functions as the Nucleophile in the catalytic mechanism. Position 117 (tyrosine 117) interacts with substrate.

It belongs to the tRNA pseudouridine synthase TruA family. In terms of assembly, homodimer.

It catalyses the reaction uridine(38/39/40) in tRNA = pseudouridine(38/39/40) in tRNA. In terms of biological role, formation of pseudouridine at positions 38, 39 and 40 in the anticodon stem and loop of transfer RNAs. In Desulfotalea psychrophila (strain LSv54 / DSM 12343), this protein is tRNA pseudouridine synthase A 2.